We begin with the raw amino-acid sequence, 504 residues long: MEIPRQTEMVELVPNGKHLEGLLPVGMPTADTQRAEDAQHCGEGKGFLQQSSSKEPHFTDFEGKTSFGMSVFNLSNAIMGSGILGLAYAMANTGIILFLFLLTAVALLSSYSIHLLLKSSGIVGIRAYEQLGYRAFGTPGKLAAALAITLQNIGAMSSYLYIIKSELPLVIQTFLNLEKPTPVWYMDGNYLVILVSVIIILPLALMRQLGYLGYSSGFSLSCMVFFLIAVIYKKFQVPCPLAHNLVNATGNFSHMVVVEEKSQLQSEPDTAEAFCTPSYFTLNSQTAYTIPIMAFAFVCHPEVLPIYTELKDPSKRKMQHISNLSIAVMYVMYFLAALFGYLTFYDGVESELLHTYSKVDPFDVLILCVRVAVLIAVTLTVPIVLFPVRRAIQQMLFQNQEFSWLRHVLIATGLLTCINLLVIFAPNILGIFGIIGATSAPCLIFIFPAIFYFRIMPTEKEPVRSTPKILALCFAAVGFLLMTMSLSFIITDWVSGTSQHGGNH.

Residue Ser52 is modified to Phosphoserine; by PKC. A glycan (N-linked (GlcNAc...) asparagine) is linked at Asn73. The next 5 helical transmembrane spans lie at 82–102 (GILG…LFLL), 105–125 (VALL…IVGI), 143–163 (AAAL…LYII), 186–206 (MDGN…LALM), and 212–232 (LGYS…AVIY). A disulfide bridge links Cys239 with Cys275. N-linked (GlcNAc...) asparagine glycosylation is found at Asn247 and Asn251. The chain crosses the membrane as a helical span at residues 287–307 (AYTIPIMAFAFVCHPEVLPIY). Asn323 carries N-linked (GlcNAc...) asparagine glycosylation. 5 helical membrane passes run 324–344 (LSIA…YLTF), 366–386 (ILCV…IVLF), 408–428 (VLIA…APNI), 431–451 (IFGI…PAIF), and 469–489 (ILAL…LSFI).

The protein belongs to the amino acid/polyamine transporter 2 family. Phosphorylation at Ser-52 induces internalization and sequestration into an intracellular reservoir. During dephosphorylation by protein phosphatases, can recycle back to the plasma membrane and regain activity. Prolonged phosphorylation results in its degradation. Highly expressed in liver. Expressed in skeletal muscle. Expressed in kidney, heart and brain. Not detected in gut, lung or spleen. Expressed ubiquitously in hepatocytes in liver whereas in kidney expression is restricted to the medulla. Within brain, expressed in glial cells. In the cerebellum, expressed on Bergmann glial fibers in the molecular layer and astrocytes in the granule layer. Expressed in brain kidney and liver (at protein level). In the adult kidney, highly expressed in the outer strip of the outer medulla and medullary rays penetrating into the kidney cortex (at protein level).

It is found in the cell membrane. The protein resides in the basolateral cell membrane. It catalyses the reaction L-glutamine(out) + Na(+)(out) + H(+)(in) = L-glutamine(in) + Na(+)(in) + H(+)(out). It carries out the reaction L-asparagine(out) + Na(+)(out) + H(+)(in) = L-asparagine(in) + Na(+)(in) + H(+)(out). The enzyme catalyses L-histidine(out) + Na(+)(out) + H(+)(in) = L-histidine(in) + Na(+)(in) + H(+)(out). Its activity is regulated as follows. L-glutamine efflux and L-glutamine uptake are regulated by CO2/HCO3(-) through SLC4A4 leading to modulation of cytosolic pH and Na(+)concentration. Symporter that cotransports specific neutral amino acids and sodium ions, coupled to an H(+) antiporter activity. Mainly participates in the glutamate-GABA-glutamine cycle in brain where it transports L-glutamine from astrocytes in the intercellular space for the replenishment of both neurotransmitters glutamate and gamma-aminobutyric acid (GABA) in neurons. Also functions as the major influx transporter in ganglion cells mediating the uptake of glutamine. The transport activity is specific for L-glutamine, L-histidine and L-asparagine. The transport is electroneutral coupled to the cotransport of 1 Na(+) and the antiport of 1 H(+), pH dependent, saturable, Li(+) tolerant and functions in both direction depending on the concentration gradients of its substrates and cotransported ions. Also mediates an amino acid-gated H(+) conductance that is not stoichiometrically coupled to the amino acid transport but which influences the ionic gradients that drive the amino acid transport. In addition, may play a role in nitrogen metabolism, amino acid homeostasis, glucose metabolism and renal ammoniagenesis. This chain is Sodium-coupled neutral amino acid transporter 3, found in Rattus norvegicus (Rat).